The sequence spans 214 residues: ER lumen protein-retaining receptor 3 (214 aa).

Topologically, residues 1 to 4 are lumenal; it reads MNVF. Residues 5 to 24 form a helical membrane-spanning segment; the sequence is RISGDVSHLLAIIILLLKMW. Residues 25–32 are Cytoplasmic-facing; that stretch reads KSKSCAGI. The helical transmembrane segment at 33-52 threads the bilayer; the sequence is SGKSQLLFALVFTTRYLDLF. The interval 47 to 48 is interaction with the K-D-E-L motif on target proteins; sequence RY. Topologically, residues 53–58 are lumenal; that stretch reads TVFISA. Residues 59–79 form a helical membrane-spanning segment; it reads YNTVMKIVFLVCAYVTVYLIY. Over 80–92 the chain is Cytoplasmic; it reads GKFRKAYDSENDT. The helical transmembrane segment at 93 to 110 threads the bilayer; sequence FRLEFLLVPVIGLSFLEN. At 111 to 116 the chain is on the lumenal side; the sequence is YEFTPL. Residues 117 to 135 traverse the membrane as a helical segment; the sequence is EILWTFSIYLESVAILPQL. Topologically, residues 136–149 are cytoplasmic; that stretch reads FMISKTGEAESITT. The helical transmembrane segment at 150–168 threads the bilayer; it reads HYLFFLGLYRVLYLANWIW. Residues 159-169 form an interaction with the K-D-E-L motif on target proteins region; the sequence is RVLYLANWIWR. Topologically, residues 169-178 are lumenal; that stretch reads RYHTEKFYDQ. Residues 179 to 199 traverse the membrane as a helical segment; the sequence is IAVVSGVVQTIFYFDFFYLYI. Residues 200–214 lie on the Cytoplasmic side of the membrane; that stretch reads TKVLKGKKLSLPMPV. The interval 204–207 is important for recycling of cargo proteins with the sequence motif K-D-E-L from the Golgi to the endoplasmic reticulum; that stretch reads KGKK.

The protein belongs to the ERD2 family.

It is found in the endoplasmic reticulum membrane. Its subcellular location is the golgi apparatus membrane. It localises to the cytoplasmic vesicle. The protein localises to the COPI-coated vesicle membrane. In terms of biological role, receptor for the C-terminal sequence motif K-D-E-L that is present on endoplasmic reticulum resident proteins and that mediates their recycling from the Golgi back to the endoplasmic reticulum. The chain is ER lumen protein-retaining receptor 3 (kdelr3) from Xenopus tropicalis (Western clawed frog).